We begin with the raw amino-acid sequence, 716 residues long: MFEIMRKTIEWGGKTLVLETGRIARQADGAVLATMGETVVLATAVFAKKAKPGQDFFPLTVNYIEKTYAAGKIPGGFFKREGRPSEKETLVSRLIDRPIRPLFVKGFKNEVQVVCTVLQHDLENDPDIVAMCAASAALVISGAPFMGPIGGCRVGYVNDEYILNPTLDELKESKMDLVVAGTADAVMMVESEIQELSEEIVLGGVSFAHKSMQAVINGIIELAEHAAKEPFDFQPEDTDALKAEVKKAVGADLADAYTIRAKGDRHAALSAAKSKAVDTFAKSDANPAGIDPLKLISVFKELEADIVRRSILDTGIRIDGRTVDTVRPILGEVGILPRTHGSALFTRGETQAIVVATLGTGDDEQFIDALEGTYKEAFLLHYNFPPFSVGETGRMGSPGRREIGHGKLAWRALRPMLPAKEDFPYTIRLVSEITESNGSSSMATVCGASLAMMDAGVPLIRPVSGIAMGLILEKDGFAVLSDILGDEDHLGDMDFKVAGTSQGLTSLQMDIKIAGITEEIMKQALAQAKGGREHILGEMNKAMDAPREEVGDYAPKIETITIPTDKIREVIGTGGKVIREIVATTGAKVDINDEGTVKVSASDGAKIKAAIDWIKSITQEAEVGAIYDGKVVKVVDFGAFVNFFGAKDGLVHVSQISNERVAKPSDVLKEGQIVKVKLLGFDDRGKTKLSMKVVDQETGEDLSKKEAVSPEEAVNT.

Mg(2+) contacts are provided by D488 and D494. The KH domain occupies P555–I614. Positions G624–K692 constitute an S1 motif domain. The segment at D695–T716 is disordered.

The protein belongs to the polyribonucleotide nucleotidyltransferase family. Mg(2+) is required as a cofactor.

The protein resides in the cytoplasm. It carries out the reaction RNA(n+1) + phosphate = RNA(n) + a ribonucleoside 5'-diphosphate. In terms of biological role, involved in mRNA degradation. Catalyzes the phosphorolysis of single-stranded polyribonucleotides processively in the 3'- to 5'-direction. This chain is Polyribonucleotide nucleotidyltransferase, found in Caulobacter sp. (strain K31).